Reading from the N-terminus, the 762-residue chain is 5-methyltetrahydropteroyltriglutamate--homocysteine methyltransferase (762 aa).

Residues 17 to 20 (REWK) and lysine 111 contribute to the 5-methyltetrahydropteroyltri-L-glutamate site. Residues 435–437 (IGS) and glutamate 488 contribute to the L-homocysteine site. Residues 435–437 (IGS) and glutamate 488 contribute to the L-methionine site. 5-methyltetrahydropteroyltri-L-glutamate contacts are provided by residues 519 to 520 (RC) and tryptophan 565. Aspartate 603 contacts L-homocysteine. Aspartate 603 contacts L-methionine. A 5-methyltetrahydropteroyltri-L-glutamate-binding site is contributed by glutamate 609. Positions 645, 647, and 669 each coordinate Zn(2+). Residue histidine 698 is the Proton donor of the active site. Cysteine 730 contacts Zn(2+).

It belongs to the vitamin-B12 independent methionine synthase family. The cofactor is Zn(2+).

The enzyme catalyses 5-methyltetrahydropteroyltri-L-glutamate + L-homocysteine = tetrahydropteroyltri-L-glutamate + L-methionine. Its pathway is amino-acid biosynthesis; L-methionine biosynthesis via de novo pathway; L-methionine from L-homocysteine (MetE route): step 1/1. Its function is as follows. Catalyzes the transfer of a methyl group from 5-methyltetrahydrofolate to homocysteine resulting in methionine formation. This chain is 5-methyltetrahydropteroyltriglutamate--homocysteine methyltransferase, found in Bacillus thuringiensis (strain Al Hakam).